We begin with the raw amino-acid sequence, 411 residues long: Na(+)-translocating NADH-quinone reductase subunit B (411 aa).

The next 3 membrane-spanning stretches (helical) occupy residues 56–76 (IMITVWLCTFPAMFFGMYNAG), 121–141 (FLPIYLVTFAVGGFWEVLFAV), and 161–181 (ILPATIPLWQVALGITFGVVI). Thr228 is modified (FMN phosphoryl threonine). The next 5 helical transmembrane spans lie at 254 to 274 (FIPGSVGETSTLAILIGAAVL), 284 to 304 (IMLGVFVGMALTAMLFTAIGS), 309 to 329 (MFGMPWYWHLVLGGFAFGMVF), 345 to 365 (LLFGFLIGVMTVLIRVVNPAF), and 368 to 388 (GIMLAILFANLFAPMIDHFFV).

The protein belongs to the NqrB/RnfD family. Composed of six subunits; NqrA, NqrB, NqrC, NqrD, NqrE and NqrF. Requires FMN as cofactor.

Its subcellular location is the cell inner membrane. The catalysed reaction is a ubiquinone + n Na(+)(in) + NADH + H(+) = a ubiquinol + n Na(+)(out) + NAD(+). In terms of biological role, NQR complex catalyzes the reduction of ubiquinone-1 to ubiquinol by two successive reactions, coupled with the transport of Na(+) ions from the cytoplasm to the periplasm. NqrA to NqrE are probably involved in the second step, the conversion of ubisemiquinone to ubiquinol. This is Na(+)-translocating NADH-quinone reductase subunit B from Chromohalobacter salexigens (strain ATCC BAA-138 / DSM 3043 / CIP 106854 / NCIMB 13768 / 1H11).